The sequence spans 556 residues: RING finger protein 207 (556 aa).

The RING-type zinc finger occupies 25–64 (CPLCHAQYERPCLLDCFHEFCAGCLRGRAADGRLACPLCQ). Residues 93-145 (TEVVRCANCDLECGKQDAETTYFCNTCGQPLCARCRDETHRARMFARHDIVAL) form a B box-type; atypical zinc finger. The Zn(2+) site is built by cysteine 98, cysteine 101, cysteine 127, and histidine 132. Coiled coils occupy residues 218-273 (TREA…NKAE) and 385-425 (FTEH…SLIK). Residues 517-556 (FQVPVDEPSDHPQNTHDDGVNAEAPARVSTLKPAMEKEVS) are disordered. Over residues 524 to 535 (PSDHPQNTHDDG) the composition is skewed to basic and acidic residues.

Interacts with the core-glycosylated, but not the fully glycosylated form of KCNH2/HERG. Interacts with DNAJA1 and HSPA8. Interacts (via the C-terminus) with HSPA1A; this interaction additively increases KCNH2 expression.

It localises to the cytoplasm. Its function is as follows. Plays a role in cardiac repolarization possibly by stabilizing membrane expression of the potassium channel KCNH2/HERG, or by assisting its synthesis, folding or export from the endoplasmic reticulum, in a heat shock protein-dependent manner. This is RING finger protein 207 (RNF207) from Bos taurus (Bovine).